The primary structure comprises 367 residues: Innexin inx2 (367 aa).

The Cytoplasmic portion of the chain corresponds to 1–22 (MFDVFGSVKGLLKIDQVCIDNN). The chain crosses the membrane as a helical span at residues 23–43 (VFRMHYKATVIILIAFSLLVT). Over 44–109 (SRQYIGDPID…EDEVKYHKYY (66 aa)) the chain is Extracellular. Residues 110–130 (QWVCFVLFFQAILFYVPRYLW) form a helical membrane-spanning segment. Residues 130–179 (WKSWEGGRLKMLVMDLNSPIVNDECKNDRKKILVDYFIGNLNRHNFYAFR) are interaction with shg. Residues 131–179 (KSWEGGRLKMLVMDLNSPIVNDECKNDRKKILVDYFIGNLNRHNFYAFR) are Cytoplasmic-facing. The chain crosses the membrane as a helical span at residues 180–200 (FFVCEALNFVNVIGQIYFVDF). Topologically, residues 201 to 266 (FLDGEFSTYG…VLPLNIVNEK (66 aa)) are extracellular. The helical transmembrane segment at 267-287 (IYVFLWFWFIILSIMSGISLI) threads the bilayer. The Cytoplasmic segment spans residues 288 to 367 (YRIAVVAGPK…HSAHKRPFDA (80 aa)).

The protein belongs to the pannexin family. In terms of assembly, monomer and heterooligomer with ogre or Inx3 (via cytoplasmic C-terminal region). Interacts (via cytoplasmic loop) with shg (via cytoplasmic region). Interacts with arm. As to expression, in ovary, expressed in inner germarial sheath cells, prefollicular cells, follicle cells, nurse cells and oocytes. Expressed in embryonic epithelial cells. Expressed in foregut and hindgut from stage 11-17, segmentally repeated tracheal placodes at stage 14, salivary gland at stage 16 and proventriculus at stage 16-17 (at protein level). During germband extension stage (stage 7), expressed in epidermal epithelial cells. Expressed in cephalic furrow. Repeating epidermal pattern emerges at stage 11, refines to one or two cells at each side of the segment borders by stage 13. Expressed in the imaginal wing disk. In pupae, expressed in the CNS and in primary, secondary and tertiary pigment cells of the retina. Expressed in optic lamina of the adult CNS.

It is found in the cell membrane. Its subcellular location is the cell junction. It localises to the gap junction. The protein localises to the cytoplasm. The protein resides in the apical cell membrane. It is found in the apicolateral cell membrane. Its subcellular location is the basolateral cell membrane. It localises to the lateral cell membrane. Structural components of the gap junctions. Involved in gap junctional communication between germline and somatic cells which is essential for normal oogenesis. In embryonic epidermis, required for epithelial morphogenesis. Required for keyhole formation during early stages of proventriculus development in response to wg signaling. In follicle cells, promotes the formation of egg chambers in part through regulation of shg and baz at the boundary between germ cells and follicle cells. In inner germarial sheath cells, required for survival of early germ cells and for cyst formation. This chain is Innexin inx2 (Inx2), found in Drosophila melanogaster (Fruit fly).